Here is a 358-residue protein sequence, read N- to C-terminus: Arginine kinase (358 aa).

Residues 6–88 (SVEELWAKLD…LDAVIKEYHK (83 aa)) form the Phosphagen kinase N-terminal domain. Substrate is bound at residue 61–65 (GVGIY). The Phosphagen kinase C-terminal domain maps to 116 to 353 (YIVSTRVRVG…EACLAKEKEL (238 aa)). Residues 119–123 (STRVR) and H182 each bind ATP. E222 contacts substrate. Position 226 (R226) interacts with ATP. C269 is a substrate binding site. ATP-binding positions include 278 to 282 (RASVH) and 306 to 311 (RGIHGE). E311 contributes to the substrate binding site.

Belongs to the ATP:guanido phosphotransferase family. In terms of assembly, monomer.

It carries out the reaction L-arginine + ATP = N(omega)-phospho-L-arginine + ADP + H(+). This chain is Arginine kinase, found in Haliotis madaka (Giant abalone).